The following is a 218-amino-acid chain: Dehydration-responsive element-binding protein 1B (218 aa).

Residues 1 to 26 form a disordered region; the sequence is MEVEEAAYRTVWSEPPKRPAGRTKFR. Positions 32 to 95 form a DNA-binding region, AP2/ERF; sequence VYRGVRRRGG…RGRAACLNFA (64 aa). The segment at 131-151 is disordered; the sequence is SAAPSSPAETFADDGDEEEDN. The segment covering 141–151 has biased composition (acidic residues); the sequence is FADDGDEEEDN.

It belongs to the AP2/ERF transcription factor family. ERF subfamily.

Its subcellular location is the nucleus. Transcriptional activator that binds specifically to the DNA sequence 5'-[AG]CCGAC-3'. Binding to the C-repeat/DRE element mediates high salinity- and dehydration-inducible transcription. Confers resistance to high salt, cold and drought stress. In Oryza sativa subsp. indica (Rice), this protein is Dehydration-responsive element-binding protein 1B (DREB1B).